The chain runs to 291 residues: Phosphoribosylaminoimidazole-succinocarboxamide synthase (291 aa).

It belongs to the SAICAR synthetase family.

The enzyme catalyses 5-amino-1-(5-phospho-D-ribosyl)imidazole-4-carboxylate + L-aspartate + ATP = (2S)-2-[5-amino-1-(5-phospho-beta-D-ribosyl)imidazole-4-carboxamido]succinate + ADP + phosphate + 2 H(+). Its pathway is purine metabolism; IMP biosynthesis via de novo pathway; 5-amino-1-(5-phospho-D-ribosyl)imidazole-4-carboxamide from 5-amino-1-(5-phospho-D-ribosyl)imidazole-4-carboxylate: step 1/2. This Candida albicans (Yeast) protein is Phosphoribosylaminoimidazole-succinocarboxamide synthase (ADE1).